Reading from the N-terminus, the 463-residue chain is Glycogen synthase (463 aa).

Lysine 15 is an ADP-alpha-D-glucose binding site.

The protein belongs to the glycosyltransferase 1 family. Bacterial/plant glycogen synthase subfamily.

The enzyme catalyses [(1-&gt;4)-alpha-D-glucosyl](n) + ADP-alpha-D-glucose = [(1-&gt;4)-alpha-D-glucosyl](n+1) + ADP + H(+). Its pathway is glycan biosynthesis; glycogen biosynthesis. Functionally, synthesizes alpha-1,4-glucan chains using ADP-glucose. The protein is Glycogen synthase of Aquifex aeolicus (strain VF5).